The chain runs to 94 residues: Putative septation protein SpoVG (94 aa).

It belongs to the SpoVG family.

Its function is as follows. Could be involved in septation. The polypeptide is Putative septation protein SpoVG (Acholeplasma laidlawii (strain PG-8A)).